The following is a 184-amino-acid chain: NADH-quinone oxidoreductase subunit B (184 aa).

[4Fe-4S] cluster-binding residues include C37, C38, C103, and C132.

The protein belongs to the complex I 20 kDa subunit family. NDH-1 is composed of 14 different subunits. Subunits NuoB, C, D, E, F, and G constitute the peripheral sector of the complex. Requires [4Fe-4S] cluster as cofactor.

The protein localises to the cell membrane. It catalyses the reaction a quinone + NADH + 5 H(+)(in) = a quinol + NAD(+) + 4 H(+)(out). Functionally, NDH-1 shuttles electrons from NADH, via FMN and iron-sulfur (Fe-S) centers, to quinones in the respiratory chain. The immediate electron acceptor for the enzyme in this species is believed to be a menaquinone. Couples the redox reaction to proton translocation (for every two electrons transferred, four hydrogen ions are translocated across the cytoplasmic membrane), and thus conserves the redox energy in a proton gradient. The chain is NADH-quinone oxidoreductase subunit B from Rhodococcus jostii (strain RHA1).